A 166-amino-acid chain; its full sequence is Putative membrane protein 164 (166 aa).

Residues 1-4 (MYHP) lie on the Intravirion side of the membrane. Residues 5–25 (VVQVLIGLILVIILILGFYHL) form a helical membrane-spanning segment. Topologically, residues 26–166 (KKKSCKTDTD…TIMGIARNIL (141 aa)) are virion surface.

This sequence belongs to the asfivirus envelope protein p22 family.

It is found in the virion membrane. The protein resides in the host cell membrane. In Ornithodoros (relapsing fever ticks), this protein is Putative membrane protein 164.